The chain runs to 308 residues: Methionine synthase (308 aa).

His192, Cys194, Glu215, and Cys282 together coordinate Zn(2+).

It belongs to the archaeal MetE family. It depends on Zn(2+) as a cofactor.

It participates in amino-acid biosynthesis; L-methionine biosynthesis via de novo pathway. In terms of biological role, catalyzes the transfer of a methyl group to L-homocysteine resulting in methionine formation. Can use methylcobalamin and methylcobinamide as methyl donors, but methylcobalamin is not considered to be the physiological substrate. In Methanocaldococcus jannaschii (strain ATCC 43067 / DSM 2661 / JAL-1 / JCM 10045 / NBRC 100440) (Methanococcus jannaschii), this protein is Methionine synthase.